A 371-amino-acid chain; its full sequence is S-adenosylmethionine:tRNA ribosyltransferase-isomerase (371 aa).

It belongs to the QueA family. As to quaternary structure, monomer.

It localises to the cytoplasm. It catalyses the reaction 7-aminomethyl-7-carbaguanosine(34) in tRNA + S-adenosyl-L-methionine = epoxyqueuosine(34) in tRNA + adenine + L-methionine + 2 H(+). It functions in the pathway tRNA modification; tRNA-queuosine biosynthesis. In terms of biological role, transfers and isomerizes the ribose moiety from AdoMet to the 7-aminomethyl group of 7-deazaguanine (preQ1-tRNA) to give epoxyqueuosine (oQ-tRNA). This is S-adenosylmethionine:tRNA ribosyltransferase-isomerase from Prochlorococcus marinus (strain MIT 9303).